A 448-amino-acid polypeptide reads, in one-letter code: Glucan 1,3-beta-glucosidase I/II (448 aa).

The first 19 residues, 1-19 (MLSLKTLLCTLLTVSSVLA), serve as a signal peptide directing secretion. The propeptide occupies 20-40 (TPVPARDPSSIQFVHEENKKR). A glycan (N-linked (GlcNAc...) asparagine) is linked at N165. E232 (proton donor) is an active-site residue. N325 carries N-linked (GlcNAc...) asparagine glycosylation. The Nucleophile role is filled by E334.

Belongs to the glycosyl hydrolase 5 (cellulase A) family.

The protein localises to the secreted. Its subcellular location is the cell wall. It catalyses the reaction Successive hydrolysis of beta-D-glucose units from the non-reducing ends of (1-&gt;3)-beta-D-glucans, releasing alpha-glucose.. Functionally, glucanases possibly play a role in cell expansion during growth, in cell-cell fusion during mating, and in spore release during sporulation. This enzyme hydrolyzes both 1,3-beta- and 1,6-beta-linkages and even has beta-glucosidase activity. It could also function biosynthetically as a transglycosylase. The chain is Glucan 1,3-beta-glucosidase I/II (EXG1) from Saccharomyces cerevisiae (strain ATCC 204508 / S288c) (Baker's yeast).